The primary structure comprises 153 residues: UPF0178 protein Ccel_2994 (153 aa).

Belongs to the UPF0178 family.

In Ruminiclostridium cellulolyticum (strain ATCC 35319 / DSM 5812 / JCM 6584 / H10) (Clostridium cellulolyticum), this protein is UPF0178 protein Ccel_2994.